The chain runs to 1240 residues: MFCAAGGPASPGGKSAARAASGFFAPHNPRGATQTAPPPCRRQNFYNPHLAQTGTQPKAPGPAQRHTYYSECDEFRFIAPRSLDEDAPAEQRTGVHDGRLRRAPKVYCGGDERDVLRVGPEGFWPRRLRLWGGADHAPEGFDPTVTVFHVYDILEHVEHAYSMRAAQLHERFMDAITPAGTVITLLGLTPEGHRVAVHVYGTRQYFYMNKAEVDRHLQCRAPRDLCERLAAALRESPGASFRGISADHFEAEVVERADVYYYETRPTLYYRVFVRSGRALAYLCDNFCPAIRKYEGGVDATTRFILDNPGFVTFGWYRLKPGRGNAPAQPRPPTAFGTSSDVEFNCTADNLAVEGAMCDLPAYKLMCFDIECKAGGEDELAFPVAERPEDLVIQISCLLYDLSTTALEHILLFSLGSCDLPESHLSDLASRGLPAPVVLEFDSEFEMLLAFMTFVKQYGPEFVTGYNIINFDWPFVLTKLTEIYKVPLDGYGRMNGRGVFRVWDIGQSHFQKRSKIKVNGMVNIDMYGIITDKVKLSSYKLNAVAEAVLKDKKKDLSYRDIPAYYASGPAQRGVIGEYCVQDSLLVGQLFFKFLPHLELSAVARLAGINITRTIYDGQQIRVFTCLLRLAGQKGFILPDTQGRFRGLDKEAPKRPAVPRGEGERPGDGNGDEDKDDDEDGDEDGDEREEVARETGGRHVGYQGARVLDPTSGFHVDPVVVFDFASLYPSIIQAHNLCFSTLSLRPEAVAHLEADRDYLEIEVGGRRLFFVKAHVRESLLSILLRDWLAMRKQIRSRIPQSPPEEAVLLDKQQAAIKVVCNSVYGFTGVQHGLLPCLHVAATVTTIGREMLLATRAYVHARWAEFDQLLADFPEAAGMRAPGPYSMRIIYGDTDSIFVLCRGLTGEALVAMGDKMASHISRALFLPPIKLECEKTFTKLLLIAKKKYIGVICGGKMLIKGVDLVRKNNCAFINRTSRALVDLLFYDDTVSGAAAALAERPAEEWLARPLPEGLQAFGAVLVDAHRRITDPERDIQDFVLTAELSRHPRAYTNKRLAHLTVYYKLMARRAQVPSIKDRIPYVIVAQTREVEETVARLAALRELDAAAPGDEPAPPAALPSPAKRPRETPSHADPPGGASKPRKLLVSELAEDPGYAIARGVPLNTDYYFSHLLGAACVTFKALFGNNAKITESLLKRFIPETWHPPDDVAARLRAAGFGPAGAGATAEETRRMLHRAFDTLA.

The span at 1–26 (MFCAAGGPASPGGKSAARAASGFFAP) shows a compositional bias: low complexity. 3 disordered regions span residues 1–65 (MFCA…PAQR), 646–695 (GLDK…RETG), and 1103–1139 (AAAPGDEPAPPAALPSPAKRPRETPSHADPPGGASKP). Over residues 44 to 56 (NFYNPHLAQTGTQ) the composition is skewed to polar residues. A compositionally biased stretch (acidic residues) spans 669–688 (NGDEDKDDDEDGDEDGDERE).

It belongs to the DNA polymerase type-B family. As to quaternary structure, forms a complex with the ssDNA-binding protein UL29, the DNA polymerase processivity factor, and the alkaline exonuclease. Interacts with the putative helicase-primase complex subunit UL8; this interaction may coordinate leading and lagging strand DNA synthesis at the replication fork.

The protein resides in the host nucleus. The enzyme catalyses DNA(n) + a 2'-deoxyribonucleoside 5'-triphosphate = DNA(n+1) + diphosphate. It catalyses the reaction Endonucleolytic cleavage to 5'-phosphomonoester.. Replicates viral genomic DNA. The replication complex is composed of six viral proteins: the DNA polymerase, processivity factor, primase, primase-associated factor, helicase, and ssDNA-binding protein. Additionally, the polymerase contains an intrinsic ribonuclease H (RNase H) activity that specifically degrades RNA/DNA heteroduplexes or duplex DNA substrates in the 5' to 3' direction. Therefore, it can catalyze the excision of the RNA primers that initiate the synthesis of Okazaki fragments at a replication fork during viral DNA replication. The chain is DNA polymerase catalytic subunit from Human herpesvirus 2 (strain 186) (HHV-2).